The chain runs to 52 residues: MIEPSLKALASKYNCEKSICRKCYARLPPRATNCRKRKCGHTNQLRPKKKLK.

Zn(2+) is bound by residues Cys-20, Cys-23, Cys-34, and Cys-39.

This sequence belongs to the eukaryotic ribosomal protein eL40 family. In terms of assembly, component of the large ribosomal subunit. Mature ribosomes consist of a small (40S) and a large (60S) subunit. The 40S subunit contains about 32 different proteins and 1 molecule of RNA (18S). The 60S subunit contains 45 different proteins and 3 molecules of RNA (25S, 5.8S and 5S). The cofactor is Zn(2+).

It localises to the cytoplasm. Component of the ribosome, a large ribonucleoprotein complex responsible for the synthesis of proteins in the cell. The small ribosomal subunit (SSU) binds messenger RNAs (mRNAs) and translates the encoded message by selecting cognate aminoacyl-transfer RNA (tRNA) molecules. The large subunit (LSU) contains the ribosomal catalytic site termed the peptidyl transferase center (PTC), which catalyzes the formation of peptide bonds, thereby polymerizing the amino acids delivered by tRNAs into a polypeptide chain. The nascent polypeptides leave the ribosome through a tunnel in the LSU and interact with protein factors that function in enzymatic processing, targeting, and the membrane insertion of nascent chains at the exit of the ribosomal tunnel. In Candida albicans (strain SC5314 / ATCC MYA-2876) (Yeast), this protein is Large ribosomal subunit protein eL40.